A 173-amino-acid chain; its full sequence is ATP synthase subunit delta (173 aa).

This sequence belongs to the ATPase delta chain family. As to quaternary structure, F-type ATPases have 2 components, F(1) - the catalytic core - and F(0) - the membrane proton channel. F(1) has five subunits: alpha(3), beta(3), gamma(1), delta(1), epsilon(1). F(0) has three main subunits: a(1), b(2) and c(10-14). The alpha and beta chains form an alternating ring which encloses part of the gamma chain. F(1) is attached to F(0) by a central stalk formed by the gamma and epsilon chains, while a peripheral stalk is formed by the delta and b chains.

It is found in the cell inner membrane. In terms of biological role, f(1)F(0) ATP synthase produces ATP from ADP in the presence of a proton or sodium gradient. F-type ATPases consist of two structural domains, F(1) containing the extramembraneous catalytic core and F(0) containing the membrane proton channel, linked together by a central stalk and a peripheral stalk. During catalysis, ATP synthesis in the catalytic domain of F(1) is coupled via a rotary mechanism of the central stalk subunits to proton translocation. Functionally, this protein is part of the stalk that links CF(0) to CF(1). It either transmits conformational changes from CF(0) to CF(1) or is implicated in proton conduction. This is ATP synthase subunit delta from Campylobacter lari (strain RM2100 / D67 / ATCC BAA-1060).